The sequence spans 311 residues: MPRFVYFCFALIALLPISWTMDGILITDVEIHVDVCQISCKASNTASLLINDAPFTPMCNSAGDQIFFTYNGTAAISDLKNVTFILEVTTDTKNCTFTANYTGYFTPDPKSKPFQLGFASATLNRDMGKVTKTIMEDSGEMVEQDFSNSSAVPTPASTTPLPQSTVAHLTIAYVHLQYEETKTVVNKNGGAVAVAVIEGIALIAILAFLGYRTMVNHKLQNSTRTNGLYGYDNNNSSRITVPDAMRMSDIPPPRDPMYASPPTPLSQPTPARNTVMTTQELVVPTANSSAAQPSTTSNGQFNDPFATLESW.

Positions 1-20 are cleaved as a signal peptide; that stretch reads MPRFVYFCFALIALLPISWT. The Extracellular segment spans residues 21–188; the sequence is MDGILITDVE…EETKTVVNKN (168 aa). A helical membrane pass occupies residues 189-209; that stretch reads GGAVAVAVIEGIALIAILAFL. Over 210–311 the chain is Cytoplasmic; sequence GYRTMVNHKL…NDPFATLESW (102 aa). The span at 287-301 shows a compositional bias: polar residues; that stretch reads NSSAAQPSTTSNGQF. The interval 287–311 is disordered; that stretch reads NSSAAQPSTTSNGQFNDPFATLESW.

As to expression, expressed in the intestinal lumen. Also present, at lower levels, in the excretory duct cells.

It is found in the apical cell membrane. The protein localises to the cytoplasm. Functionally, plays a role in RNA-mediated gene silencing by mediating endocytic uptake of double-stranded RNA (dsRNA) ingested from the environment into intestinal cells from the intestinal lumen. Selective for dsRNAs of at least 50 bp. Required for avoidance behavior induced by small RNAs derived from pathogenic bacteria such as P.aeruginosa. The chain is Systemic RNA interference defective protein 2 from Caenorhabditis elegans.